The following is an 85-amino-acid chain: ATP synthase subunit c (85 aa).

Helical transmembrane passes span 10 to 30 (IAVG…FALL) and 53 to 73 (FIIA…ALLF).

Belongs to the ATPase C chain family. In terms of assembly, F-type ATPases have 2 components, F(1) - the catalytic core - and F(0) - the membrane proton channel. F(1) has five subunits: alpha(3), beta(3), gamma(1), delta(1), epsilon(1). F(0) has three main subunits: a(1), b(2) and c(10-14). The alpha and beta chains form an alternating ring which encloses part of the gamma chain. F(1) is attached to F(0) by a central stalk formed by the gamma and epsilon chains, while a peripheral stalk is formed by the delta and b chains.

The protein resides in the cell inner membrane. F(1)F(0) ATP synthase produces ATP from ADP in the presence of a proton or sodium gradient. F-type ATPases consist of two structural domains, F(1) containing the extramembraneous catalytic core and F(0) containing the membrane proton channel, linked together by a central stalk and a peripheral stalk. During catalysis, ATP synthesis in the catalytic domain of F(1) is coupled via a rotary mechanism of the central stalk subunits to proton translocation. Its function is as follows. Key component of the F(0) channel; it plays a direct role in translocation across the membrane. A homomeric c-ring of between 10-14 subunits forms the central stalk rotor element with the F(1) delta and epsilon subunits. This chain is ATP synthase subunit c, found in Aliivibrio fischeri (strain ATCC 700601 / ES114) (Vibrio fischeri).